Reading from the N-terminus, the 125-residue chain is Large ribosomal subunit protein bL12 (125 aa).

It belongs to the bacterial ribosomal protein bL12 family. As to quaternary structure, homodimer. Part of the ribosomal stalk of the 50S ribosomal subunit. Forms a multimeric L10(L12)X complex, where L10 forms an elongated spine to which 2 to 4 L12 dimers bind in a sequential fashion. Binds GTP-bound translation factors.

Functionally, forms part of the ribosomal stalk which helps the ribosome interact with GTP-bound translation factors. Is thus essential for accurate translation. This is Large ribosomal subunit protein bL12 from Sinorhizobium medicae (strain WSM419) (Ensifer medicae).